Here is a 91-residue protein sequence, read N- to C-terminus: Insertion element IS1 7 protein InsA (91 aa).

This sequence belongs to the IS1 elements InsA family.

Its function is as follows. Absolutely required for transposition of IS1. In Escherichia coli (strain K12), this protein is Insertion element IS1 7 protein InsA (insA7).